The following is a 60-amino-acid chain: MDPKLLELLVCPVTKGPLTYDRERDELVSRSARLAYPVRDGIPVLLETEARPLTDAELEA.

This sequence belongs to the UPF0434 family.

The protein is UPF0434 protein Aave_2563 of Paracidovorax citrulli (strain AAC00-1) (Acidovorax citrulli).